Here is an 89-residue protein sequence, read N- to C-terminus: Small ribosomal subunit protein uS15 (89 aa).

This sequence belongs to the universal ribosomal protein uS15 family. In terms of assembly, part of the 30S ribosomal subunit. Forms a bridge to the 50S subunit in the 70S ribosome, contacting the 23S rRNA.

Functionally, one of the primary rRNA binding proteins, it binds directly to 16S rRNA where it helps nucleate assembly of the platform of the 30S subunit by binding and bridging several RNA helices of the 16S rRNA. In terms of biological role, forms an intersubunit bridge (bridge B4) with the 23S rRNA of the 50S subunit in the ribosome. The chain is Small ribosomal subunit protein uS15 from Cellvibrio japonicus (strain Ueda107) (Pseudomonas fluorescens subsp. cellulosa).